Consider the following 108-residue polypeptide: uncharacterized protein (108 aa).

Residues 1–108 (MAKVTSEPQK…DKEQSETSVL (108 aa)) form a disordered region. A compositionally biased stretch (basic residues) spans 26-56 (KGRKKGKTPRQRRSRSGVKGLKTTRKAKRPL). A compositionally biased stretch (polar residues) spans 58–70 (GSSSQKAGETNTP). Over residues 73-92 (KPKKARGPILRGRYHRLKEK) the composition is skewed to basic residues. The span at 93-108 (MKKEEADKEQSETSVL) shows a compositional bias: basic and acidic residues.

This is an uncharacterized protein from Homo sapiens (Human).